The primary structure comprises 160 residues: Large ribosomal subunit protein uL15 (160 aa).

Residues 1-13 show a composition bias toward basic and acidic residues; that stretch reads MKLNELRDNEGAA. Positions 1 to 51 are disordered; the sequence is MKLNELRDNEGAARKKKRVARGPGSGKGKTAGRGIKGQKSRSGVALNGYEG. Residues 23 to 35 are compositionally biased toward gly residues; that stretch reads PGSGKGKTAGRGI.

The protein belongs to the universal ribosomal protein uL15 family. As to quaternary structure, part of the 50S ribosomal subunit.

Its function is as follows. Binds to the 23S rRNA. This Cereibacter sphaeroides (strain ATCC 17025 / ATH 2.4.3) (Rhodobacter sphaeroides) protein is Large ribosomal subunit protein uL15.